An 803-amino-acid chain; its full sequence is Lon protease (803 aa).

Positions Met9 to Ala202 constitute a Lon N-terminal domain. Gly356–Thr363 is a binding site for ATP. The Lon proteolytic domain maps to Gln592–Asn773. Active-site residues include Ser679 and Lys722.

It belongs to the peptidase S16 family. As to quaternary structure, homohexamer. Organized in a ring with a central cavity.

The protein localises to the cytoplasm. It catalyses the reaction Hydrolysis of proteins in presence of ATP.. ATP-dependent serine protease that mediates the selective degradation of mutant and abnormal proteins as well as certain short-lived regulatory proteins. Required for cellular homeostasis and for survival from DNA damage and developmental changes induced by stress. Degrades polypeptides processively to yield small peptide fragments that are 5 to 10 amino acids long. Binds to DNA in a double-stranded, site-specific manner. In Haemophilus influenzae (strain ATCC 51907 / DSM 11121 / KW20 / Rd), this protein is Lon protease.